The chain runs to 597 residues: MSASYQTIEHDVPQSYRDKILKWNGWGYSDSQFAINKDGHVTFTGDKYEISGKVMPHFRPWFENYLGIDLGFVSPAQKLSDVIIDAPVENEDIIEFLQENKISFSNEARIRLMRGHGHTVHDMINLREGKIPRLPDIVVWPKSEHEIVKIIEGAMSHNCAIIPIGGGTSVTNALDTPETEKRAVISMDMALLDKILWIDRENLTCRAQAGIVGQSLERQLNKKGFTCGHEPDSIEFSTLGGWVSTRASGMKKNKYGNIEDLVVHLNFVCPKGIIQKQCQVPRMSSGPDIHQIILGSEGTLGVVSEVTIKIFPIPEVKRFGSFVFPNFESGVNFFREVAIQRCQPASLRLMDNDQFVMGQALKVASDSWWADLKSSVSKMYITSWKGFKVDEICAATCVYEGNREEVDQHEERLNKLAEQFHGVVGGAENGQYGYRLTFAIAYLRDLGMNHGVLGESFETSVPWDKVLSLCRNVKELMKREAKAQGVTHPVLANCRVTQVYDAGACVYFYFGFNARGLKNGLEVYDRIETAARDEIIACGGSISHHHGVGKIRKQWMLTTNGAVGIALLKAIKSELDPANIFASANLIDIIGSPHCKL.

The FAD-binding PCMH-type domain occupies 131-313 (IPRLPDIVVW…SEVTIKIFPI (183 aa)). Residues 163–169 (PIGGGTS), 232–238 (DSIEFST), 245–248 (TRAS), and 297–303 (EGTLGVV) contribute to the FAD site. Residue R444 participates in substrate binding. Residue Y507 is the Proton donor/acceptor of the active site. The tract at residues 544-546 (HHH) is important for enzyme activity. The Microbody targeting signal motif lies at 595–597 (CKL).

Belongs to the FAD-binding oxidoreductase/transferase type 4 family. As to quaternary structure, homodimer. It depends on FAD as a cofactor.

It is found in the peroxisome. It catalyses the reaction a long chain fatty alcohol + a 1-acylglycerone 3-phosphate = a 1-O-alkylglycerone 3-phosphate + a long-chain fatty acid + H(+). It functions in the pathway glycerolipid metabolism; ether lipid biosynthesis. Its function is as follows. Catalyzes the exchange of an acyl for a long-chain alkyl group and the formation of the ether bond in the biosynthesis of ether phospholipids. This chain is Alkyldihydroxyacetonephosphate synthase (ads-1), found in Caenorhabditis elegans.